A 282-amino-acid chain; its full sequence is Homeobox protein vex1 (282 aa).

The homeobox DNA-binding region spans 129–188; that stretch reads ASRARTKFTAEQLEELEKSFKENRYIGSSEKRRLSKVLKLSENQIKTWFQNRRMKFKRQT.

Its subcellular location is the nucleus. Its function is as follows. Transcriptional repressor. Acts in a ventral signaling pathway downstream of bmp4 to antagonize the Spemann organizer and ventrally pattern the embryonic mesoderm. Represses transcription of the dorsal genes gsc and otx2. This Xenopus tropicalis (Western clawed frog) protein is Homeobox protein vex1.